Consider the following 762-residue polypeptide: 1-phosphatidylinositol 4,5-bisphosphate phosphodiesterase delta-4 (762 aa).

The 109-residue stretch at 16–124 (LLMQEGMPMR…WMRGLQLLVD (109 aa)) folds into the PH domain. The substrate binding stretch occupies residues 26 to 53 (KVRSKSWKKLRYFRLQNDGMTVWHARQA). 3 consecutive EF-hand domains span residues 134 to 169 (RLDQWLSDWFQRGDKNQDGKMSFQEVQRLLHLMNVE), 170 to 205 (MDQEYAFSLFQAADTSQSGTLEGEEFVQFYKALTKR), and 206 to 237 (AEVQELFESFSADGQKLTLLEFLDFLREEQKE). Positions 147, 149, 151, 153, 158, 183, 185, 187, 189, and 194 each coordinate Ca(2+). Positions 213–243 (ESFSADGQKLTLLEFLDFLREEQKERDCTSE) match the GBA motif. A PI-PLC X-box domain is found at 290–435 (QDMTQPLNHY…LRRRILVKGK (146 aa)). Histidine 305 is an active-site residue. Residues asparagine 306, glutamate 335, and aspartate 337 each contribute to the Ca(2+) site. Residue histidine 350 is part of the active site. A Ca(2+)-binding site is contributed by glutamate 384. 2 residues coordinate substrate: lysine 433 and lysine 435. Positions 443 to 471 (LEYEEEEAEPELEESELALESQFETEPEP) are enriched in acidic residues. Residues 443-483 (LEYEEEEAEPELEESELALESQFETEPEPQEQNLQSKDKKK) are disordered. Serine 457 carries the post-translational modification Phosphoserine. The PI-PLC Y-box domain maps to 493–609 (LSSLVIYLKS…GYVLKPDFLR (117 aa)). Residues serine 522 and arginine 549 each coordinate substrate. The 128-residue stretch at 609 to 736 (RDIQSSFHPE…QGYRHIHLLS (128 aa)) folds into the C2 domain. The Ca(2+) site is built by isoleucine 650, aspartate 652, asparagine 676, aspartate 705, tyrosine 706, and aspartate 707. The short motif at 731–734 (HIHL) is the PDZ-binding element.

In terms of assembly, interacts with GRIP1. Interacts (via GBA motif) with guanine nucleotide-binding protein G(i) alpha subunit GNAI3 (inactive GDP-bound form); low-affinity interaction. Requires Ca(2+) as cofactor.

The protein localises to the membrane. The protein resides in the nucleus. It is found in the cytoplasm. Its subcellular location is the endoplasmic reticulum. It carries out the reaction a 1,2-diacyl-sn-glycero-3-phospho-(1D-myo-inositol-4,5-bisphosphate) + H2O = 1D-myo-inositol 1,4,5-trisphosphate + a 1,2-diacyl-sn-glycerol + H(+). The catalysed reaction is a 1,2-diacyl-sn-glycero-3-phospho-(1D-myo-inositol) + H2O = 1D-myo-inositol 1-phosphate + a 1,2-diacyl-sn-glycerol + H(+). In terms of biological role, hydrolyzes the phosphatidylinositol 4,5-bisphosphate (PIP2) to generate 2 second messenger molecules diacylglycerol (DAG) and inositol 1,4,5-trisphosphate (IP3). DAG mediates the activation of protein kinase C (PKC), while IP3 releases Ca(2+) from intracellular stores. Required for acrosome reaction in sperm during fertilization, probably by acting as an important enzyme for intracellular Ca(2+) mobilization in the zona pellucida-induced acrosome reaction. May play a role in cell growth. Modulates the liver regeneration in cooperation with nuclear PKC. Overexpression up-regulates the Erk signaling pathway and proliferation. The sequence is that of 1-phosphatidylinositol 4,5-bisphosphate phosphodiesterase delta-4 (PLCD4) from Pongo abelii (Sumatran orangutan).